The following is a 115-amino-acid chain: MAALWLQSVSLLVLMLVSWSGSQAVLPPQHLCGAHLVDALYLVCGERGFFYTPKRDVDPLLGFLPAKSGGAAAGGENEVAEFAFKDQMEMMVKRGIVEQCCHKPCNIFDLQNYCN.

The N-terminal stretch at 1 to 22 (MAALWLQSVSLLVLMLVSWSGS) is a signal peptide. 3 disulfide bridges follow: Cys32-Cys101, Cys44-Cys114, and Cys100-Cys105. The propeptide at 56-92 (DVDPLLGFLPAKSGGAAAGGENEVAEFAFKDQMEMMV) is c peptide.

Belongs to the insulin family. As to quaternary structure, heterodimer of a B chain and an A chain linked by two disulfide bonds.

Its subcellular location is the secreted. Its function is as follows. Insulin decreases blood glucose concentration. It increases cell permeability to monosaccharides, amino acids and fatty acids. It accelerates glycolysis, the pentose phosphate cycle, and glycogen synthesis in liver. The chain is Insulin (ins) from Verasper moseri (Barfin flounder).